Reading from the N-terminus, the 307-residue chain is Transmembrane and coiled-coil domain-containing protein 5B (307 aa).

Positions 17 to 207 (FASSLEAVKQ…LEKQISKAQD (191 aa)) form a coiled coil. A helical membrane pass occupies residues 243–265 (YFQYLTFMVLVFIRLLAYVIFHL).

The protein belongs to the TMCO5 family.

The protein resides in the membrane. In Homo sapiens (Human), this protein is Transmembrane and coiled-coil domain-containing protein 5B (TMCO5B).